The following is an 861-amino-acid chain: Bifunctional uridylyltransferase/uridylyl-removing enzyme (861 aa).

The uridylyltransferase stretch occupies residues 1-321 (MKNDNRIIKN…VYHQKQKIIR (321 aa)). A uridylyl-removing region spans residues 322–678 (LDDEFQLSNR…IMPHHSQGGT (357 aa)). An HD domain is found at 440–562 (VDQHTLFVIR…LPHARYLDYL (123 aa)). ACT domains lie at 679-760 (EVFI…AVSR) and 788-861 (QLFL…KSKY).

Belongs to the GlnD family. Mg(2+) serves as cofactor.

The catalysed reaction is [protein-PII]-L-tyrosine + UTP = [protein-PII]-uridylyl-L-tyrosine + diphosphate. It catalyses the reaction [protein-PII]-uridylyl-L-tyrosine + H2O = [protein-PII]-L-tyrosine + UMP + H(+). Uridylyltransferase (UTase) activity is inhibited by glutamine, while glutamine activates uridylyl-removing (UR) activity. Functionally, modifies, by uridylylation and deuridylylation, the PII regulatory proteins (GlnB and homologs), in response to the nitrogen status of the cell that GlnD senses through the glutamine level. Under low glutamine levels, catalyzes the conversion of the PII proteins and UTP to PII-UMP and PPi, while under higher glutamine levels, GlnD hydrolyzes PII-UMP to PII and UMP (deuridylylation). Thus, controls uridylylation state and activity of the PII proteins, and plays an important role in the regulation of nitrogen assimilation and metabolism. The polypeptide is Bifunctional uridylyltransferase/uridylyl-removing enzyme (Legionella pneumophila (strain Corby)).